We begin with the raw amino-acid sequence, 361 residues long: Queuine tRNA-ribosyltransferase (361 aa).

Residue D92 is the Proton acceptor of the active site. Substrate contacts are provided by residues 92 to 96, D146, Q189, and G216; that span reads DSGGF. Residues 247-253 form an RNA binding region; that stretch reads GVGKPAD. D266 acts as the Nucleophile in catalysis. The RNA binding; important for wobble base 34 recognition stretch occupies residues 271 to 275; it reads TRSGR. C304, C306, C309, and H335 together coordinate Zn(2+).

It belongs to the queuine tRNA-ribosyltransferase family. As to quaternary structure, homodimer. Within each dimer, one monomer is responsible for RNA recognition and catalysis, while the other monomer binds to the replacement base PreQ1. Zn(2+) is required as a cofactor.

It carries out the reaction 7-aminomethyl-7-carbaguanine + guanosine(34) in tRNA = 7-aminomethyl-7-carbaguanosine(34) in tRNA + guanine. The protein operates within tRNA modification; tRNA-queuosine biosynthesis. In terms of biological role, catalyzes the base-exchange of a guanine (G) residue with the queuine precursor 7-aminomethyl-7-deazaguanine (PreQ1) at position 34 (anticodon wobble position) in tRNAs with GU(N) anticodons (tRNA-Asp, -Asn, -His and -Tyr). Catalysis occurs through a double-displacement mechanism. The nucleophile active site attacks the C1' of nucleotide 34 to detach the guanine base from the RNA, forming a covalent enzyme-RNA intermediate. The proton acceptor active site deprotonates the incoming PreQ1, allowing a nucleophilic attack on the C1' of the ribose to form the product. After dissociation, two additional enzymatic reactions on the tRNA convert PreQ1 to queuine (Q), resulting in the hypermodified nucleoside queuosine (7-(((4,5-cis-dihydroxy-2-cyclopenten-1-yl)amino)methyl)-7-deazaguanosine). This Rickettsia typhi (strain ATCC VR-144 / Wilmington) protein is Queuine tRNA-ribosyltransferase.